The chain runs to 721 residues: Kinesin-like protein KIF2C (721 aa).

Residues M1 to I250 form a globular region. Residues S3 and S19 each carry the phosphoserine modification. Residue S92 is modified to Phosphoserine; by AURKB. The short motif at S95 to P98 is the Microtubule tip localization signal element. Phosphoserine occurs at positions 106, 108, 112, 162, 171, 183, and 188. The disordered stretch occupies residues E164 to S188. Residues S171–N182 show a composition bias toward polar residues. Positions E203 to E234 are negative regulator of microtubule-binding. In terms of domain architecture, Kinesin motor spans R254–L584. Residues R260 and G344–T351 contribute to the ATP site. S515 and S626 each carry phosphoserine. Residues G614–G652 are a coiled coil.

Belongs to the TRAFAC class myosin-kinesin ATPase superfamily. Kinesin family. MCAK/KIF2 subfamily. Interacts with CENPH. Interacts with MTUS2/TIP150; the interaction is direct. Interacts with MAPRE1; the interaction is direct, regulated by phosphorylation and is probably required for targeting to growing microtubule plus ends. Interacts with KIF18B at microtubule tips; this interaction increases the affinity of both partners for microtubule plus ends and is required for robust microtubule depolymerization. Phosphorylation by AURKA or AURKB strongly reduces KIF18B-binding. Post-translationally, phosphorylation by AURKB, regulates association with centromeres and kinetochores and the microtubule depolymerization activity. In terms of processing, ubiquitinated.

It is found in the cytoplasm. The protein resides in the cytoskeleton. Its subcellular location is the nucleus. The protein localises to the chromosome. It localises to the centromere. It is found in the kinetochore. In complex with KIF18B, constitutes the major microtubule plus-end depolymerizing activity in mitotic cells. Regulates the turnover of microtubules at the kinetochore and functions in chromosome segregation during mitosis. Plays a role in chromosome congression and is required for the lateral to end-on conversion of the chromosome-microtubule attachment. The chain is Kinesin-like protein KIF2C (Kif2c) from Mus musculus (Mouse).